A 339-amino-acid chain; its full sequence is 4-hydroxy-2-oxovalerate aldolase (339 aa).

The 253-residue stretch at 7 to 259 (VILHDMSLRD…QSGIDLYKIM (253 aa)) folds into the Pyruvate carboxyltransferase domain. 15 to 16 (RD) serves as a coordination point for substrate. Mn(2+) is bound at residue Asp-16. The active-site Proton acceptor is the His-19. Substrate-binding residues include Ser-169 and His-198. Residues His-198 and His-200 each contribute to the Mn(2+) site. Position 289 (Tyr-289) interacts with substrate.

This sequence belongs to the 4-hydroxy-2-oxovalerate aldolase family.

The enzyme catalyses (S)-4-hydroxy-2-oxopentanoate = acetaldehyde + pyruvate. The sequence is that of 4-hydroxy-2-oxovalerate aldolase from Marinomonas sp. (strain MWYL1).